The following is a 218-amino-acid chain: GTP cyclohydrolase 1 (218 aa).

Residues Cys109, His112, and Cys180 each contribute to the Zn(2+) site.

This sequence belongs to the GTP cyclohydrolase I family. Toroid-shaped homodecamer, composed of two pentamers of five dimers.

It carries out the reaction GTP + H2O = 7,8-dihydroneopterin 3'-triphosphate + formate + H(+). Its pathway is cofactor biosynthesis; 7,8-dihydroneopterin triphosphate biosynthesis; 7,8-dihydroneopterin triphosphate from GTP: step 1/1. The polypeptide is GTP cyclohydrolase 1 (folE) (Haemophilus influenzae (strain ATCC 51907 / DSM 11121 / KW20 / Rd)).